A 266-amino-acid polypeptide reads, in one-letter code: Tryptophan synthase alpha chain (266 aa).

Active-site proton acceptor residues include Glu49 and Asp60.

It belongs to the TrpA family. As to quaternary structure, tetramer of two alpha and two beta chains.

It catalyses the reaction (1S,2R)-1-C-(indol-3-yl)glycerol 3-phosphate + L-serine = D-glyceraldehyde 3-phosphate + L-tryptophan + H2O. Its pathway is amino-acid biosynthesis; L-tryptophan biosynthesis; L-tryptophan from chorismate: step 5/5. The alpha subunit is responsible for the aldol cleavage of indoleglycerol phosphate to indole and glyceraldehyde 3-phosphate. The protein is Tryptophan synthase alpha chain of Trichormus variabilis (strain ATCC 29413 / PCC 7937) (Anabaena variabilis).